A 384-amino-acid chain; its full sequence is 5-amino-6-(D-ribitylamino)uracil--L-tyrosine 4-hydroxyphenyl transferase 2 (384 aa).

Residues 53-286 (VSYVVNRNIY…IAISRVILHT (234 aa)) enclose the Radical SAM core domain. [4Fe-4S] cluster-binding residues include C67, C71, and C74.

It belongs to the radical SAM superfamily. CofH family. Consists of two subunits, CofG and CofH. [4Fe-4S] cluster is required as a cofactor.

It carries out the reaction 5-amino-6-(D-ribitylamino)uracil + L-tyrosine + S-adenosyl-L-methionine = 5-amino-5-(4-hydroxybenzyl)-6-(D-ribitylimino)-5,6-dihydrouracil + 2-iminoacetate + 5'-deoxyadenosine + L-methionine + H(+). The protein operates within cofactor biosynthesis; coenzyme F0 biosynthesis. In terms of biological role, catalyzes the radical-mediated synthesis of 5-amino-5-(4-hydroxybenzyl)-6-(D-ribitylimino)-5,6-dihydrouracil from 5-amino-6-(D-ribitylamino)uracil and L-tyrosine. In Methanosarcina barkeri (strain Fusaro / DSM 804), this protein is 5-amino-6-(D-ribitylamino)uracil--L-tyrosine 4-hydroxyphenyl transferase 2.